A 663-amino-acid polypeptide reads, in one-letter code: Leishmanolysin-like peptidase (663 aa).

H246 provides a ligand contact to Zn(2+). E247 is an active-site residue. Positions 250 and 353 each coordinate Zn(2+).

Belongs to the peptidase M8 family. Zn(2+) is required as a cofactor.

It localises to the cytoplasm. Its function is as follows. Metalloprotease. The protein is Leishmanolysin-like peptidase of Caenorhabditis briggsae.